Consider the following 155-residue polypeptide: MSESKSGPEYASFFAVMGASAAMVFSALGAAYGTAKSGTGIAAMSVMRPEQIMKSIIPVVMAGIIAIYGLVVAVLIANSLNDDISLYKSFLQLGAGLSVGLSGLAAGFAIGIVGDAGVRGTAQQPRLFVGMILILIFAEVLGLYGLIVALILSTK.

The Lumenal segment spans residues 1–10 (MSESKSGPEY). Residues 11-33 (ASFFAVMGASAAMVFSALGAAYG) traverse the membrane as a helical segment. The Cytoplasmic segment spans residues 34–55 (TAKSGTGIAAMSVMRPEQIMKS). A helical transmembrane segment spans residues 56–76 (IIPVVMAGIIAIYGLVVAVLI). Topologically, residues 77-92 (ANSLNDDISLYKSFLQ) are lumenal. A helical transmembrane segment spans residues 93–114 (LGAGLSVGLSGLAAGFAIGIVG). The Cytoplasmic portion of the chain corresponds to 115-131 (DAGVRGTAQQPRLFVGM). Residues 132–152 (ILILIFAEVLGLYGLIVALIL) traverse the membrane as a helical segment. Residues 153-155 (STK) lie on the Lumenal side of the membrane.

The protein belongs to the V-ATPase proteolipid subunit family. In terms of assembly, V-ATPase is a heteromultimeric enzyme made up of two complexes: the ATP-hydrolytic V1 complex and the proton translocation V0 complex. The V1 complex consists of three catalytic AB heterodimers that form a heterohexamer, three peripheral stalks each consisting of EG heterodimers, one central rotor including subunits D and F, and the regulatory subunits C and H. The proton translocation complex V0 consists of the proton transport subunit a, a ring of proteolipid subunits c9c'', rotary subunit d, subunits e and f, and the accessory subunits ATP6AP1/Ac45 and ATP6AP2/PRR. Interacts with the V0 complex V-ATPase subunit a4 ATP6V0A4. Interacts with LASS2. Interacts with RNF182; this interaction leads to ubiquitination and degradation via the proteasome pathway. (Microbial infection) Interacts with HTLV-1 accessory protein p12I. In terms of processing, ubiquitinated by RNF182, leading to its degradation via the ubiquitin-proteasome pathway.

Its subcellular location is the cytoplasmic vesicle. It localises to the clathrin-coated vesicle membrane. The protein localises to the secretory vesicle. The protein resides in the synaptic vesicle membrane. Functionally, proton-conducting pore forming subunit of the V0 complex of vacuolar(H+)-ATPase (V-ATPase), a multisubunit enzyme composed of a peripheral complex (V1) that hydrolyzes ATP and a membrane integral complex (V0) that translocates protons. V-ATPase is responsible for acidifying and maintaining the pH of intracellular compartments, and in some cell types, it is targeted to the plasma membrane, where it is responsible for acidifying the extracellular environment. This is V-type proton ATPase 16 kDa proteolipid subunit c (ATP6V0C) from Homo sapiens (Human).